Consider the following 474-residue polypeptide: PTS system MurNAc-GlcNAc-specific EIIBC component (474 aa).

The PTS EIIB type-1 domain occupies 5–87 (ERLAKDITHA…ADQSGATLAE (83 aa)). Cys27 serves as the catalytic Phosphocysteine intermediate; for EIIB activity. A PTS EIIC type-1 domain is found at 124 to 474 (KSIANIFIPL…GTTKEMRNPE (351 aa)). A run of 10 helical transmembrane segments spans residues 129-149 (IFIP…IAAI), 167-187 (IVTV…IFTG), 193-213 (VFGA…LTGI), 228-248 (LAAG…LSMV), 268-288 (ITLL…AGFV), 299-319 (IIGV…LPLV), 343-363 (LLPI…ALWV), 378-398 (ALPV…TLPL), 402-422 (FFTA…IGHI), and 444-464 (LGYI…TYFF).

It localises to the cell membrane. It catalyses the reaction N-acetyl-beta-D-muramate-(1-&gt;4)-N-acetyl-D-glucosamine(out) + N(pros)-phospho-L-histidyl-[protein] = 6-phospho-N-acetyl-beta-D-muramate-(1-&gt;4)-N-acetyl-D-glucosamine(in) + L-histidyl-[protein]. The protein operates within cell wall biogenesis; peptidoglycan recycling. Its function is as follows. The phosphoenolpyruvate-dependent sugar phosphotransferase system (sugar PTS), a major carbohydrate active transport system, catalyzes the phosphorylation of incoming sugar substrates concomitantly with their translocation across the cell membrane. This system is involved in the uptake and phosphorylation of MurNAc-GlcNAc, the principle peptidoglycan turnover product of S.aureus, yielding cytoplasmic MurNAc 6P-GlcNAc. The polypeptide is PTS system MurNAc-GlcNAc-specific EIIBC component (Staphylococcus epidermidis (strain ATCC 35984 / DSM 28319 / BCRC 17069 / CCUG 31568 / BM 3577 / RP62A)).